A 702-amino-acid polypeptide reads, in one-letter code: Kinesin-like protein KIF3A (702 aa).

Positions Asn14–Ile345 constitute a Kinesin motor domain. Residue Gly100–Thr107 coordinates ATP. Residues Pro355–Leu593 are a coiled coil. 2 disordered regions span residues Lys372 to Glu424 and Leu667 to Gln702. Acidic residues predominate over residues Glu376–Glu400. Residues Asp410–Glu424 are compositionally biased toward basic and acidic residues. Positions Pro600 to Gln702 are globular. The segment covering Thr675–Ser690 has biased composition (basic residues). Ser690 bears the Phosphoserine mark.

Belongs to the TRAFAC class myosin-kinesin ATPase superfamily. Kinesin family. Kinesin II subfamily. Heterodimer of KIF3A and KIF3B. Interacts with CIMAP3. Interacts with CLN3. Interacts with DCTN1. Interacts with FLCN. Interacts with AP3B1.

The protein resides in the cytoplasm. Its subcellular location is the cytoskeleton. It is found in the cell projection. It localises to the cilium. The protein localises to the microtubule organizing center. The protein resides in the centrosome. Its subcellular location is the centriole. In terms of biological role, microtubule-based anterograde translocator for membranous organelles. Plus end-directed microtubule sliding activity in vitro. Plays a role in primary cilia formation. Plays a role in centriole cohesion and subdistal appendage organization and function. Regulates the formation of the subdistal appendage via recruitment of DCTN1 to the centriole. Also required for ciliary basal feet formation and microtubule anchoring to mother centriole. The chain is Kinesin-like protein KIF3A (KIF3A) from Macaca fascicularis (Crab-eating macaque).